A 380-amino-acid chain; its full sequence is Growth-regulating factor 4 (380 aa).

The interval 1 to 21 is disordered; that stretch reads MDLQLKQWRSQQQNESEEQGS. In terms of domain architecture, QLQ spans 82 to 117; that stretch reads FFSWAQWQELELQALIYRYMLAGASVPQELLLPIKK. Residues 151–195 form the WRC domain; that stretch reads DPEPGRCKRTDGKKWRCSRDVVAGHKYCDRHIHRGRNRSRKPVET. Short sequence motifs (bipartite nuclear localization signal) lie at residues 156-166 and 184-191; these read RCKRTDGKKWR and RGRNRSRK. 2 disordered regions span residues 222 to 270 and 284 to 330; these read NNNH…GRSD and RSSD…NMRN. Composition is skewed to low complexity over residues 228–245 and 285–296; these read SSGS…SCSS and SSDSTSSPMSSS. The segment covering 297-320 has biased composition (polar residues); the sequence is TCHLSISMPGNNTSSDVSLKLSTG.

Belongs to the GRF family. As to expression, strongly expressed in actively growing and developing tissues, such as roots, upper stems, and shoot tips containing the shoot apical meristem (SAM) and flower buds. Also expressed in mature flowers, but weakly expressed in mature stems and leaves.

It is found in the nucleus. Its function is as follows. Transcription activator that plays a role in the regulation of cell expansion in leaf and cotyledons tissues. Component of a network formed by miR396, the GRFs and their interacting factors (GIFs) acting in the regulation of meristem function, at least partially through the control of cell proliferation. The sequence is that of Growth-regulating factor 4 (GRF4) from Arabidopsis thaliana (Mouse-ear cress).